The primary structure comprises 134 residues: Protein OPG030 (134 aa).

Residues 88–133 (YKENGLRNSFLRQYINNNIEEIRNTDQFLKFDVDSVCDILNNDETI) form the BACK domain.

It belongs to the orthopoxvirus OPG030 family.

The polypeptide is Protein OPG030 (OPG30) (Variola virus (isolate Human/India/Ind3/1967) (VARV)).